The following is a 301-amino-acid chain: Protein FdhE homolog (301 aa).

Belongs to the FdhE family.

It localises to the cytoplasm. Functionally, necessary for formate dehydrogenase activity. In Shewanella baltica (strain OS195), this protein is Protein FdhE homolog.